A 246-amino-acid polypeptide reads, in one-letter code: Adenosylcobinamide-GDP ribazoletransferase (246 aa).

6 consecutive transmembrane segments (helical) span residues 34 to 54 (IVTFPLVGLLLGAIAGAVALL), 59 to 79 (CGVPLAALFGVLALALLTGGF), 113 to 133 (GGLALIFVLVAKVLVIGELLL), 138 to 158 (PIAALAAACAVGRGMAVLLMY), 171 to 191 (LFIGKVSLQQTLVTMAMGVAL), and 194 to 214 (VLLGLQGLRAALITLVLIWGL).

This sequence belongs to the CobS family. Mg(2+) serves as cofactor.

It localises to the cell inner membrane. It carries out the reaction alpha-ribazole + adenosylcob(III)inamide-GDP = adenosylcob(III)alamin + GMP + H(+). It catalyses the reaction alpha-ribazole 5'-phosphate + adenosylcob(III)inamide-GDP = adenosylcob(III)alamin 5'-phosphate + GMP + H(+). Its pathway is cofactor biosynthesis; adenosylcobalamin biosynthesis; adenosylcobalamin from cob(II)yrinate a,c-diamide: step 7/7. In terms of biological role, joins adenosylcobinamide-GDP and alpha-ribazole to generate adenosylcobalamin (Ado-cobalamin). Also synthesizes adenosylcobalamin 5'-phosphate from adenosylcobinamide-GDP and alpha-ribazole 5'-phosphate. The protein is Adenosylcobinamide-GDP ribazoletransferase of Klebsiella pneumoniae (strain 342).